A 158-amino-acid chain; its full sequence is Eukaryotic translation initiation factor 5A-1 (158 aa).

Residues 1–10 show a composition bias toward basic and acidic residues; it reads MSDEEHHFES. The interval 1–21 is disordered; the sequence is MSDEEHHFESSDAGASKTYPQ. Ser-2 carries the phosphoserine modification. The residue at position 51 (Lys-51) is a Hypusine.

The protein belongs to the eIF-5A family. Lys-51 undergoes hypusination, a unique post-translational modification that consists in the addition of a butylamino group from spermidine to lysine side chain, leading to the formation of the unusual amino acid hypusine. eIF-5As are the only known proteins to undergo this modification, which is essential for their function. In terms of tissue distribution, expressed in leaf vasculature and inflorescence stems. Present in xylem tissue but not in phloem, and in developing vessel members, but not in mature vessels members. Detected in anthers.

Translation factor that promotes translation elongation and termination, particularly upon ribosome stalling at specific amino acid sequence contexts. Binds between the exit (E) and peptidyl (P) site of the ribosome and promotes rescue of stalled ribosome: specifically required for efficient translation of polyproline-containing peptides as well as other motifs that stall the ribosome. Acts as a ribosome quality control (RQC) cofactor by joining the RQC complex to facilitate peptidyl transfer during CAT tailing step. Involved in xylogenesis. In Arabidopsis thaliana (Mouse-ear cress), this protein is Eukaryotic translation initiation factor 5A-1 (ELF5A-1).